Reading from the N-terminus, the 451-residue chain is Tubulin gamma-2 chain (451 aa).

Phosphoserine; by BRSK1 is present on Ser-131. 142-148 contributes to the GTP binding site; sequence AGGTGSG.

Belongs to the tubulin family. Component of the gamma-tubulin ring complex (gTuRC) consisting of TUBGCP2, TUBGCP3, TUBGCP4, TUBGCP5 and TUBGCP6 and gamma-tubulin TUBG1 or TUBG2. TUBGCP2, TUBGCP3, TUBGCP4, TUBGCP5 and TUBGCP6 assemble in a 5:5:2:1:1 stoichiometry; each is associated with a gamma-tubulin, thereby arranging 14 gamma-tubulins in a helical manner. Gamma-tubulin at the first position is blocked by TUBGCP3 at the last position, allowing 13 protafilaments to grow into a microtubule. Interacts with alpha-beta tubulin heterodimers; the interaction allows microtubules to nucleate from the gTuRC. In terms of processing, phosphorylation at Ser-131 by BRSK1 regulates centrosome duplication, possibly by mediating relocation of gamma-tubulin and its associated proteins from the cytoplasm to the centrosome.

Its subcellular location is the cytoplasm. It localises to the cytoskeleton. The protein localises to the microtubule organizing center. The protein resides in the centrosome. In terms of biological role, tubulin is the major constituent of microtubules, protein filaments consisting of alpha- and beta-tubulin heterodimers. Gamma-tubulin is a key component of the gamma-tubulin ring complex (gTuRC) which mediates microtubule nucleation. The gTuRC regulates the minus-end nucleation of alpha-beta tubulin heterodimers that grow into microtubule protafilaments, a critical step in centrosome duplication and spindle formation. In Homo sapiens (Human), this protein is Tubulin gamma-2 chain (TUBG2).